Reading from the N-terminus, the 578-residue chain is Matrix metalloproteinase-17 (578 aa).

Disordered regions lie at residues 1–22 (MGRR…PGPG) and 107–133 (PRCS…TKWS). The N-terminal stretch at 1-39 (MGRRPRGPGSPRGPGPPRPGPGLPPLLLVLALAAHGGCA) is a signal peptide. Pro residues predominate over residues 11–22 (PRGPGPPRPGPG). Residues 40–124 (APAPRAEDLS…PPGAQSRRKR (85 aa)) constitute a propeptide that is removed on maturation. The Cysteine switch signature appears at 107–114 (PRCSLPDL). Position 109 (Cys109) interacts with Zn(2+). An N-linked (GlcNAc...) asparagine glycan is attached at Asn136. His247 lines the Zn(2+) pocket. Glu248 is a catalytic residue. 2 residues coordinate Zn(2+): His251 and His257. The disordered stretch occupies residues 301 to 334 (PTAQLDTPEPEEPPLLPEPPNNRSSTPPQKDVPH). Asn322 is a glycosylation site (N-linked (GlcNAc...) asparagine). 4 Hemopexin repeats span residues 333 to 382 (PHRC…WRGL), 386 to 432 (LDSV…SLPP), 436 to 479 (DAVF…WRGV), and 480 to 527 (PSML…WLVC). Cysteines 336 and 527 form a disulfide. Ser558 carries GPI-anchor amidated serine lipidation. The propeptide at 559–578 (DAHRLALPSLLLLTPLLWGL) is removed in mature form.

This sequence belongs to the peptidase M10A family. Zn(2+) serves as cofactor. Requires Ca(2+) as cofactor. Post-translationally, the precursor is cleaved by a furin endopeptidase. In terms of tissue distribution, expressed by monocytes and macrophages.

Its subcellular location is the cell membrane. It is found in the secreted. It localises to the extracellular space. The protein localises to the extracellular matrix. Its function is as follows. Endopeptidase that degrades various components of the extracellular matrix, such as fibrin. May be involved in the activation of membrane-bound precursors of growth factors or inflammatory mediators, such as tumor necrosis factor-alpha. May also be involved in tumoral process. Not obvious if able to proteolytically activate progelatinase A. Does not hydrolyze collagen types I, II, III, IV and V, gelatin, fibronectin, laminin, decorin nor alpha1-antitrypsin. The chain is Matrix metalloproteinase-17 (Mmp17) from Mus musculus (Mouse).